Consider the following 315-residue polypeptide: MKIIIFRVLTFFFVIFSVNVVAKEFTLDFSTAKTYVDSLNVIRSAIGTPLQTISSGGTSLLMIDSGTGDNLFAVDVRGIDPEEGRFNNLRLIVERNNLYVTGFVNRTNNVFYRFADFSHVTFPGTTAVTLSGDSSYTTLQRVAGISRTGMQINRHSLTTSYLDLMSHSGTSLTQSVARAMLRFVTVTAEALRFRQIQRGFRTTLDDLSGRSYVMTAEDVDLTLNWGRLSSVLPDYHGQDSVRVGRISFGSINAILGSVALILNCHHHASRVARMASDEFPSMCPADGRVRGITHNKILWDSSTLGAILMRRTISS.

An N-terminal signal peptide occupies residues 1 to 22 (MKIIIFRVLTFFFVIFSVNVVA). An A1 region spans residues 23–273 (KEFTLDFSTA…CHHHASRVAR (251 aa)). Glu-189 is an active-site residue. Residues Cys-264 and Cys-283 are joined by a disulfide bond. Residues 274–315 (MASDEFPSMCPADGRVRGITHNKILWDSSTLGAILMRRTISS) are A2.

It belongs to the ribosome-inactivating protein family. Shiga toxin contains a single subunit A and five copies of subunit B.

It catalyses the reaction Endohydrolysis of the N-glycosidic bond at one specific adenosine on the 28S rRNA.. Functionally, the A subunit is responsible for inhibiting protein synthesis through the catalytic inactivation of 60S ribosomal subunits. After endocytosis, the A subunit is cleaved by furin in two fragments, A1 and A2: A1 is the catalytically active fragment, and A2 is essential for holotoxin assembly with the B subunits. This chain is Shiga toxin subunit A (stxA), found in Shigella sonnei (Shigella sonnei bacteriophage 7888).